Reading from the N-terminus, the 285-residue chain is MSTPGPVPSSTSVATLPFSAQDKTQEQVSEELQSVGIYQDLERYEETIQQLSKSVDTFKPDLSLIDKVIECDKKLYETLEEFDEYYKIEEELSRLDKEQKNIDNKTREILETLNTCYNSLNELPMLEQVEFEQKVMLKQREKIHSKVVLDYAMKLAKFTRFPPTFDKSMIGPNNFIWPAEDSLRKGMLAMASLKKKELLLDALDEDNVNNDNNTSKIDEMRNTNEDSVDDRFNNKEQVQDATEDTERRGSFEFTANGKEDSETKSEENPDLELDLDLDLFNPDEF.

Residues 1-13 (MSTPGPVPSSTSV) are compositionally biased toward low complexity. The interval 1-25 (MSTPGPVPSSTSVATLPFSAQDKTQ) is disordered. A coiled-coil region spans residues 31–115 (ELQSVGIYQD…TREILETLNT (85 aa)). Residues 206–285 (DNVNNDNNTS…DLDLFNPDEF (80 aa)) are disordered. Composition is skewed to basic and acidic residues over residues 216–250 (KIDE…RRGS) and 257–267 (GKEDSETKSEE). Positions 268–285 (NPDLELDLDLDLFNPDEF) are enriched in acidic residues.

This sequence belongs to the Mediator complex subunit 4 family. As to quaternary structure, component of the Mediator complex.

The protein resides in the nucleus. Its function is as follows. Component of the Mediator complex, a coactivator involved in the regulated transcription of nearly all RNA polymerase II-dependent genes. Mediator functions as a bridge to convey information from gene-specific regulatory proteins to the basal RNA polymerase II transcription machinery. Mediator is recruited to promoters by direct interactions with regulatory proteins and serves as a scaffold for the assembly of a functional preinitiation complex with RNA polymerase II and the general transcription factors. The chain is Mediator of RNA polymerase II transcription subunit 4 (MED4) from Kluyveromyces lactis (strain ATCC 8585 / CBS 2359 / DSM 70799 / NBRC 1267 / NRRL Y-1140 / WM37) (Yeast).